Consider the following 198-residue polypeptide: MYEHLKRYGVSKNIIEAMNKIDRKYFVPENVKDLAYDDIPLPIGFGQTISAPHMVGIMCKELDLKEKDKVLEIGTGSGYNAAVMSLLVGKSGHIYTIERIKQLYKIATKRFKQFGLTNITCILGDGKEGFEEYAPFDKIVVTCYSKFVPNKLLEQLSDNGILLIPVGDEFVQVLKKIKKINGQISEEDLLHVKFVPLV.

The active site involves S50.

Belongs to the methyltransferase superfamily. L-isoaspartyl/D-aspartyl protein methyltransferase family.

It localises to the cytoplasm. It catalyses the reaction [protein]-L-isoaspartate + S-adenosyl-L-methionine = [protein]-L-isoaspartate alpha-methyl ester + S-adenosyl-L-homocysteine. Its function is as follows. Catalyzes the methyl esterification of L-isoaspartyl residues in peptides and proteins that result from spontaneous decomposition of normal L-aspartyl and L-asparaginyl residues. It plays a role in the repair and/or degradation of damaged proteins. In Thermosipho melanesiensis (strain DSM 12029 / CIP 104789 / BI429), this protein is Protein-L-isoaspartate O-methyltransferase.